The primary structure comprises 157 residues: NAD(P)H-quinone oxidoreductase subunit N (157 aa).

It belongs to the complex I NdhN subunit family. NDH-1 can be composed of about 15 different subunits; different subcomplexes with different compositions have been identified which probably have different functions.

It localises to the cellular thylakoid membrane. It catalyses the reaction a plastoquinone + NADH + (n+1) H(+)(in) = a plastoquinol + NAD(+) + n H(+)(out). The catalysed reaction is a plastoquinone + NADPH + (n+1) H(+)(in) = a plastoquinol + NADP(+) + n H(+)(out). NDH-1 shuttles electrons from an unknown electron donor, via FMN and iron-sulfur (Fe-S) centers, to quinones in the respiratory and/or the photosynthetic chain. The immediate electron acceptor for the enzyme in this species is believed to be plastoquinone. Couples the redox reaction to proton translocation, and thus conserves the redox energy in a proton gradient. Cyanobacterial NDH-1 also plays a role in inorganic carbon-concentration. In Synechococcus sp. (strain CC9902), this protein is NAD(P)H-quinone oxidoreductase subunit N.